The primary structure comprises 132 residues: Small ribosomal subunit protein uS8c (132 aa).

It belongs to the universal ribosomal protein uS8 family. Part of the 30S ribosomal subunit.

The protein localises to the plastid. The protein resides in the chloroplast. Functionally, one of the primary rRNA binding proteins, it binds directly to 16S rRNA central domain where it helps coordinate assembly of the platform of the 30S subunit. The chain is Small ribosomal subunit protein uS8c (rps8) from Adiantum capillus-veneris (Maidenhair fern).